An 83-amino-acid chain; its full sequence is uncharacterized protein (83 aa).

The chain crosses the membrane as a helical span at residues 58-80; sequence YWGYGAAYGISLGLIAGVALAGL.

It is found in the membrane. This is an uncharacterized protein from Bacillus subtilis (strain 168).